A 132-amino-acid polypeptide reads, in one-letter code: Large ribosomal subunit protein uL24 (132 aa).

It belongs to the universal ribosomal protein uL24 family. In terms of assembly, part of the 50S ribosomal subunit.

In terms of biological role, one of two assembly initiator proteins, it binds directly to the 5'-end of the 23S rRNA, where it nucleates assembly of the 50S subunit. Its function is as follows. One of the proteins that surrounds the polypeptide exit tunnel on the outside of the subunit. In Aquifex aeolicus (strain VF5), this protein is Large ribosomal subunit protein uL24.